Here is a 495-residue protein sequence, read N- to C-terminus: Potassium voltage-gated channel subfamily A member 1 (495 aa).

A disordered region spans residues 1-30; the sequence is MTVMSGENADEASTAPGHPQDGSYPRQADH. Positions 1-128 are tetramerization domain; sequence MTVMSGENAD…FYELGEEAME (128 aa). Residues 1 to 164 are Cytoplasmic-facing; the sequence is MTVMSGENAD…LLFEYPESSG (164 aa). S23 is modified (phosphoserine). A helical transmembrane segment spans residues 165–186; the sequence is PARVIAIVSVMVILISIVIFCL. At 187-220 the chain is on the extracellular side; the sequence is ETLPELKDDKDFTGTIHRIDNTTVIYTSNIFTDP. N-linked (GlcNAc...) asparagine glycosylation occurs at N207. The helical transmembrane segment at 221–242 threads the bilayer; it reads FFIVETLCIIWFSFELVVRFFA. The S-palmitoyl cysteine moiety is linked to residue C243. Over 243-253 the chain is Cytoplasmic; it reads CPSKTDFFKNI. The helical transmembrane segment at 254–274 threads the bilayer; sequence MNFIDIVAIIPYFITLGTEIA. Residues 275 to 287 are Extracellular-facing; sequence EQEGNQKGEQATS. Residues 288-308 traverse the membrane as a helical; Voltage-sensor segment; the sequence is LAILRVIRLVRVFRIFKLSRH. The Cytoplasmic portion of the chain corresponds to 309–323; sequence SKGLQILGQTLKASM. Positions 310 to 323 are S4-S5 linker; it reads KGLQILGQTLKASM. Position 322 is a phosphoserine; by PKA (S322). Residues 324–345 form a helical membrane-spanning segment; the sequence is RELGLLIFFLFIGVILFSSAVY. At 346–359 the chain is on the extracellular side; it reads FAEAEEAESHFSSI. The helical intramembrane region spans 360–371; sequence PDAFWWAVVSMT. The Selectivity filter motif lies at 372 to 377; sequence TVGYGD. The stretch at 372–379 is an intramembrane region; the sequence is TVGYGDMY. Over 380-386 the chain is Extracellular; it reads PVTIGGK. A helical membrane pass occupies residues 387–415; sequence IVGSLCAIAGVLTIALPVPVIVSNFNYFY. The Cytoplasmic segment spans residues 416–495; sequence HRETEGEEQA…VNKSKLLTDV (80 aa). Phosphoserine is present on residues S437 and S439. S446 carries the post-translational modification Phosphoserine; by PKA. A PDZ-binding motif is present at residues 493-495; that stretch reads TDV.

The protein belongs to the potassium channel family. A (Shaker) (TC 1.A.1.2) subfamily. Kv1.1/KCNA1 sub-subfamily. As to quaternary structure, homotetramer and heterotetramer with other channel-forming alpha subunits, such as KCNA2, KCNA4, KCNA5, KCNA6 and KCNA7. Channel activity is regulated by interaction with the beta subunits KCNAB1 and KCNAB2. Identified in a complex with KCNA2 and KCNAB2. Interacts (via C-terminus) with the PDZ domains of DLG1, DLG2 and DLG4. Interacts with LGI1 within a complex containing LGI1, KCNA4 and KCNAB1. Interacts (via N-terminus) with STX1A; this promotes channel inactivation. Interacts (via N-terminus) with the heterodimer formed by GNB1 and GNG2; this promotes channel inactivation. Can interact simultaneously with STX1A and the heterodimer formed by GNB1 and GNG2. Interacts (via cytoplasmic N-terminal domain) with KCNRG; this inhibits channel activity. Interacts with ANK3; this inhibits channel activity. Interacts with ADAM11. Post-translationally, N-glycosylated. In terms of processing, palmitoylated on Cys-243; which may be required for membrane targeting. Phosphorylated on tyrosine residues. Phosphorylation increases in response to NRG1; this inhibits channel activity. Phosphorylation at Ser-446 regulates channel activity by down-regulating expression at the cell membrane. As to expression, detected in brain. Expressed in cerebellar cortex basket cell terminals, the area surround the Purkinje cell soma, and the pinceaux expansions encircling the axon initial segment (at protein level). Detected in the juxtaparanodal regions of the nodes of Ranvier in myelinated axons. Detected in the paranodal region in sciatic nerve. Detected on cell bodies in cerebellum, dorsal and ventral cochlear nucleus, pontine reticular nucleus, mesencephalic trigeminal nucleus, motor trigeminal nucleus and the pricipal sensory trigeminal nucleus. Detected in terminal fields of basket cells in the cerebellum corpus medullare. Detected in hippocampus CA3 pyramidal neurons and in the hilus and stratum moleculare of the dentate gyrus. Detected in the central nucleus and the external nucleus of the inferior colliculus. Detected in fiber tracts in the optic tract, external medullary lamina, stria terminalis, medulla, ventral pallidum and substantia nigra. Detected in neurons from dorsal root ganglion. Detected in neurons in the medial nucleus of the trapezoid body. Detected in midbrain dopamine neuron axon terminals. Detected in brain cortex. Detected in brainstem. Detected in juxtaparanodal regions of the nodes of Ranvier in the vagus nerve, but only at very low levels in the heart. Detected in the islet of Langerhans. Detected at the luminal membrane in distal convoluted tubules in the kidney (at protein level). Detected in hippocampus, thalamus, neocortex and ventral brain cortex, including the piriform and entorhinal cortex and the amygdala. Detected in midbrain dopamine neurons. Detected in heart atrium, ventricle, sinoatrial node and atrioventricular node.

It is found in the cell membrane. The protein resides in the cell projection. It localises to the axon. Its subcellular location is the membrane. The protein localises to the perikaryon. It is found in the dendrite. The protein resides in the cell junction. It localises to the synapse. Its subcellular location is the cytoplasmic vesicle. The protein localises to the endoplasmic reticulum. It is found in the presynaptic cell membrane. The protein resides in the presynapse. It carries out the reaction K(+)(in) = K(+)(out). With respect to regulation, inhibited by 4-aminopyridine (4-AP), tetraethylammonium (TEA) and dendrotoxin (DTX), but not by charybdotoxin (CTX). In terms of biological role, voltage-gated potassium channel that mediates transmembrane potassium transport in excitable membranes, primarily in the brain and the central nervous system, but also in the kidney. Contributes to the regulation of the membrane potential and nerve signaling, and prevents neuronal hyperexcitability. Forms tetrameric potassium-selective channels through which potassium ions pass in accordance with their electrochemical gradient. The channel alternates between opened and closed conformations in response to the voltage difference across the membrane. Can form functional homotetrameric channels and heterotetrameric channels that contain variable proportions of KCNA1, KCNA2, KCNA4, KCNA5, KCNA6, KCNA7, and possibly other family members as well; channel properties depend on the type of alpha subunits that are part of the channel. Channel properties are modulated by cytoplasmic beta subunits that regulate the subcellular location of the alpha subunits and promote rapid inactivation of delayed rectifier potassium channels. In vivo, membranes probably contain a mixture of heteromeric potassium channel complexes, making it difficult to assign currents observed in intact tissues to any particular potassium channel family member. Homotetrameric KCNA1 forms a delayed-rectifier potassium channel that opens in response to membrane depolarization, followed by slow spontaneous channel closure. In contrast, a heterotetrameric channel formed by KCNA1 and KCNA4 shows rapid inactivation. Regulates neuronal excitability in hippocampus, especially in mossy fibers and medial perforant path axons, preventing neuronal hyperexcitability. May function as down-stream effector for G protein-coupled receptors and inhibit GABAergic inputs to basolateral amygdala neurons. May contribute to the regulation of neurotransmitter release, such as gamma-aminobutyric acid (GABA) release. Plays a role in regulating the generation of action potentials and preventing hyperexcitability in myelinated axons of the vagus nerve, and thereby contributes to the regulation of heart contraction. Required for normal neuromuscular responses. Regulates the frequency of neuronal action potential firing in response to mechanical stimuli, and plays a role in the perception of pain caused by mechanical stimuli, but does not play a role in the perception of pain due to heat stimuli. Required for normal responses to auditory stimuli and precise location of sound sources, but not for sound perception. The use of toxins that block specific channels suggest that it contributes to the regulation of the axonal release of the neurotransmitter dopamine. Required for normal postnatal brain development and normal proliferation of neuronal precursor cells in the brain. Plays a role in the reabsorption of Mg(2+) in the distal convoluted tubules in the kidney and in magnesium ion homeostasis, probably via its effect on the membrane potential. This Mus musculus (Mouse) protein is Potassium voltage-gated channel subfamily A member 1.